Here is an 81-residue protein sequence, read N- to C-terminus: Large ribosomal subunit protein bL31B (81 aa).

This sequence belongs to the bacterial ribosomal protein bL31 family. Type B subfamily. In terms of assembly, part of the 50S ribosomal subunit.

This chain is Large ribosomal subunit protein bL31B, found in Bacillus cereus (strain G9842).